A 300-amino-acid chain; its full sequence is Small ribosomal subunit protein uS2 (300 aa).

Residues 278 to 300 (GEAQTGNEGWGTEAAAPAATTQW) form a disordered region.

Belongs to the universal ribosomal protein uS2 family. In terms of assembly, component of the small ribosomal subunit. Mature ribosomes consist of a small (40S) and a large (60S) subunit. The 40S subunit contains about 33 different proteins and 1 molecule of RNA (18S). The 60S subunit contains about 49 different proteins and 3 molecules of RNA (25S, 5.8S and 5S). Interacts with rps21.

It is found in the cytoplasm. Functionally, required for the assembly and/or stability of the 40S ribosomal subunit. Required for the processing of the 20S rRNA-precursor to mature 18S rRNA in a late step of the maturation of 40S ribosomal subunits. The polypeptide is Small ribosomal subunit protein uS2 (rps0) (Pyrenophora tritici-repentis (strain Pt-1C-BFP) (Wheat tan spot fungus)).